We begin with the raw amino-acid sequence, 475 residues long: RNA pseudouridine synthase 3, mitochondrial (475 aa).

The N-terminal 15 residues, 1-15 (MLCRRRRVGAAVRWL), are a transit peptide targeting the mitochondrion. The segment at 40-74 (RLGKPKPGPRPRQLLSLPPFPGGGDGDPLPGRKAA) is disordered. Residues 90-160 (ADVPQEVVQA…GEIKKRYETI (71 aa)) form the S4 RNA-binding domain. The active site involves aspartate 230.

It belongs to the pseudouridine synthase RluA family.

Its subcellular location is the mitochondrion. The enzyme catalyses a uridine in RNA = a pseudouridine in RNA. The chain is RNA pseudouridine synthase 3, mitochondrial from Oryza sativa subsp. japonica (Rice).